A 430-amino-acid chain; its full sequence is Argininosuccinate lyase (430 aa).

This sequence belongs to the lyase 1 family. Argininosuccinate lyase subfamily.

The protein localises to the cytoplasm. It catalyses the reaction 2-(N(omega)-L-arginino)succinate = fumarate + L-arginine. The protein operates within amino-acid biosynthesis; L-arginine biosynthesis; L-arginine from L-ornithine and carbamoyl phosphate: step 3/3. The chain is Argininosuccinate lyase from Sorangium cellulosum (strain So ce56) (Polyangium cellulosum (strain So ce56)).